Consider the following 374-residue polypeptide: Putative glutamate--cysteine ligase 2 (374 aa).

This sequence belongs to the glutamate--cysteine ligase type 2 family. YbdK subfamily.

It carries out the reaction L-cysteine + L-glutamate + ATP = gamma-L-glutamyl-L-cysteine + ADP + phosphate + H(+). Its function is as follows. ATP-dependent carboxylate-amine ligase which exhibits weak glutamate--cysteine ligase activity. This is Putative glutamate--cysteine ligase 2 from Verminephrobacter eiseniae (strain EF01-2).